The sequence spans 299 residues: HTH-type transcriptional regulator CynR (299 aa).

Residues 1–58 enclose the HTH lysR-type domain; it reads MLSRHINYFLAVAEHGSFTRAASALHVSQPALSQQIRQLEESLGVPLFDRSGRTIRLT. Residues 18 to 37 constitute a DNA-binding region (H-T-H motif); the sequence is FTRAASALHVSQPALSQQIR.

It belongs to the LysR transcriptional regulatory family.

Its subcellular location is the cytoplasm. In terms of biological role, positively regulates the cynTSX operon, and negatively regulates its own transcription. Binds specifically to the cynR-cynTSX intergenic region. This is HTH-type transcriptional regulator CynR (cynR) from Escherichia coli (strain K12).